A 1138-amino-acid polypeptide reads, in one-letter code: Eukaryotic translation initiation factor 3 subunit A (1138 aa).

The region spanning 319–502 (LQRMAAHVLL…NSIYFGTDLT (184 aa)) is the PCI domain. 2 disordered regions span residues 590 to 633 (NNAR…NEIQ) and 817 to 1138 (ERFR…VKRR). 4 stretches are compositionally biased toward basic and acidic residues: residues 817–903 (ERFR…RVER), 923–967 (DRNE…KEND), 1003–1049 (GRDD…DQPQ), and 1058–1078 (DSPR…RDVR). Residues 1082-1100 (PKEGGGGVSGGGAGGGGGN) are compositionally biased toward gly residues. Positions 1107–1128 (PREEKAPPKREQAQDKENKAGD) are enriched in basic and acidic residues.

This sequence belongs to the eIF-3 subunit A family. Component of the eukaryotic translation initiation factor 3 (eIF-3) complex. The eIF-3 complex interacts with pix.

It is found in the cytoplasm. Its function is as follows. RNA-binding component of the eukaryotic translation initiation factor 3 (eIF-3) complex, which is involved in protein synthesis of a specialized repertoire of mRNAs and, together with other initiation factors, stimulates binding of mRNA and methionyl-tRNAi to the 40S ribosome. The eIF-3 complex specifically targets and initiates translation of a subset of mRNAs involved in cell proliferation. The sequence is that of Eukaryotic translation initiation factor 3 subunit A from Drosophila virilis (Fruit fly).